Reading from the N-terminus, the 189-residue chain is GTPase NRas (189 aa).

Residue 10-17 (GAGGVGKS) coordinates GTP. An Effector region motif is present at residues 32–40 (YDPTIEDSY). GTP-binding positions include 57–61 (DTAGQ) and 116–119 (NKCD). The hypervariable region stretch occupies residues 166–185 (YRMKKLDSSEDNNQGCIRIP). A lipid anchor (S-palmitoyl cysteine) is attached at cysteine 181. Cysteine 186 carries the S-farnesyl cysteine lipid modification. Residues 187–189 (KLM) constitute a propeptide, removed in mature form.

It belongs to the small GTPase superfamily. Ras family. In terms of processing, palmitoylated by the ZDHHC9-GOLGA7 complex. Depalmitoylated by abhd17a, abhd17b and abhd17c. A continuous cycle of de- and re-palmitoylation regulates rapid exchange between plasma membrane and Golgi.

It is found in the cell membrane. The protein localises to the golgi apparatus membrane. It catalyses the reaction GTP + H2O = GDP + phosphate + H(+). Alternates between an inactive form bound to GDP and an active form bound to GTP. Activated by a guanine nucleotide-exchange factor (GEF) and inactivated by a GTPase-activating protein (GAP). Its function is as follows. Ras proteins bind GDP/GTP and possess intrinsic GTPase activity. The chain is GTPase NRas (nras) from Xenopus laevis (African clawed frog).